The following is a 77-amino-acid chain: Large ribosomal subunit protein bL28 (77 aa).

This sequence belongs to the bacterial ribosomal protein bL28 family.

In Polaromonas sp. (strain JS666 / ATCC BAA-500), this protein is Large ribosomal subunit protein bL28.